Reading from the N-terminus, the 356-residue chain is Carminomycin 4-O-methyltransferase DnrK (356 aa).

R153 serves as a coordination point for S-adenosyl-L-methionine. Substrate is bound at residue D163. S-adenosyl-L-methionine is bound by residues G187, E210, D237–F238, and S252. Residues N257 and R303 each contribute to the substrate site.

The protein belongs to the class I-like SAM-binding methyltransferase superfamily. Cation-independent O-methyltransferase family. In terms of assembly, homodimer and homotetramer in equilibrium.

It catalyses the reaction carminomycin + S-adenosyl-L-methionine = daunorubicin + S-adenosyl-L-homocysteine + H(+). The protein operates within antibiotic biosynthesis; daunorubicin biosynthesis. It functions in the pathway antibiotic biosynthesis; carminomycin biosynthesis. In terms of biological role, involved in the biosynthesis of the anthracyclines carminomycin and daunorubicin (daunomycin) which are aromatic polyketide antibiotics that exhibit high cytotoxicity and are widely applied in the chemotherapy of a variety of cancers. In vivo, catalyzes the transfer of a methyl group from S-adenosyl-L-methionine to the 4-O-position of carminomycin to form daunorubicin. In vitro, it also methylates the anthracyclines rhodomycin D (10-carbomethoxy-13-deoxycarminomycin) and 13-deoxy-carminomycin at the 4-hydroxyl position. It is quite specific with respect to the length of the carbohydrate chain at the C7 position, but it can accept substrates with bulky substituent at C10 position. The sequence is that of Carminomycin 4-O-methyltransferase DnrK (dnrK) from Streptomyces peucetius.